A 309-amino-acid polypeptide reads, in one-letter code: Homoserine kinase (309 aa).

91–101 (PIGSGLGSSAC) contributes to the ATP binding site.

This sequence belongs to the GHMP kinase family. Homoserine kinase subfamily.

It localises to the cytoplasm. The enzyme catalyses L-homoserine + ATP = O-phospho-L-homoserine + ADP + H(+). It functions in the pathway amino-acid biosynthesis; L-threonine biosynthesis; L-threonine from L-aspartate: step 4/5. Catalyzes the ATP-dependent phosphorylation of L-homoserine to L-homoserine phosphate. This Salmonella dublin (strain CT_02021853) protein is Homoserine kinase.